A 331-amino-acid polypeptide reads, in one-letter code: Tagatose 1,6-diphosphate aldolase 2 (331 aa).

The protein belongs to the aldolase LacD family.

The enzyme catalyses D-tagatofuranose 1,6-bisphosphate = D-glyceraldehyde 3-phosphate + dihydroxyacetone phosphate. The protein operates within carbohydrate metabolism; D-tagatose 6-phosphate degradation; D-glyceraldehyde 3-phosphate and glycerone phosphate from D-tagatose 6-phosphate: step 2/2. The polypeptide is Tagatose 1,6-diphosphate aldolase 2 (lacD2) (Enterococcus faecalis (strain ATCC 700802 / V583)).